The primary structure comprises 443 residues: Phosphoglucosamine mutase (443 aa).

Residue serine 101 is the Phosphoserine intermediate of the active site. Positions 101, 239, 241, and 243 each coordinate Mg(2+). Serine 101 is modified (phosphoserine).

This sequence belongs to the phosphohexose mutase family. Mg(2+) serves as cofactor. Activated by phosphorylation.

The enzyme catalyses alpha-D-glucosamine 1-phosphate = D-glucosamine 6-phosphate. In terms of biological role, catalyzes the conversion of glucosamine-6-phosphate to glucosamine-1-phosphate. This is Phosphoglucosamine mutase from Francisella tularensis subsp. holarctica (strain FTNF002-00 / FTA).